The sequence spans 89 residues: Sec-independent protein translocase protein TatA (89 aa).

The chain crosses the membrane as a helical span at residues 1–21 (MFGLSPAQLIILLVVILLIFG).

Belongs to the TatA/E family. As to quaternary structure, the Tat system comprises two distinct complexes: a TatABC complex, containing multiple copies of TatA, TatB and TatC subunits, and a separate TatA complex, containing only TatA subunits. Substrates initially bind to the TatABC complex, which probably triggers association of the separate TatA complex to form the active translocon.

The protein resides in the cell inner membrane. Its function is as follows. Part of the twin-arginine translocation (Tat) system that transports large folded proteins containing a characteristic twin-arginine motif in their signal peptide across membranes. TatA could form the protein-conducting channel of the Tat system. This Haemophilus influenzae (strain ATCC 51907 / DSM 11121 / KW20 / Rd) protein is Sec-independent protein translocase protein TatA.